Reading from the N-terminus, the 208-residue chain is Large ribosomal subunit protein bL25 (208 aa).

Acidic residues predominate over residues 185–195 (DLEEETGEAEG). The interval 185–208 (DLEEETGEAEGETAAAPAEEGAES) is disordered. Over residues 196-208 (ETAAAPAEEGAES) the composition is skewed to low complexity.

Belongs to the bacterial ribosomal protein bL25 family. CTC subfamily. Part of the 50S ribosomal subunit; part of the 5S rRNA/L5/L18/L25 subcomplex. Contacts the 5S rRNA. Binds to the 5S rRNA independently of L5 and L18.

Functionally, this is one of the proteins that binds to the 5S RNA in the ribosome where it forms part of the central protuberance. This Rhodococcus opacus (strain B4) protein is Large ribosomal subunit protein bL25.